Here is a 447-residue protein sequence, read N- to C-terminus: Histidine--tRNA ligase (447 aa).

The protein belongs to the class-II aminoacyl-tRNA synthetase family. In terms of assembly, homodimer.

Its subcellular location is the cytoplasm. The catalysed reaction is tRNA(His) + L-histidine + ATP = L-histidyl-tRNA(His) + AMP + diphosphate + H(+). In Synechocystis sp. (strain ATCC 27184 / PCC 6803 / Kazusa), this protein is Histidine--tRNA ligase (hisS).